A 640-amino-acid polypeptide reads, in one-letter code: tRNA-dihydrouridine(47) synthase [NAD(P)(+)]-like (640 aa).

Positions 1–11 (MAESEGSNTEN) are enriched in polar residues. Disordered regions lie at residues 1 to 23 (MAES…ENLD) and 43 to 123 (FIDA…HSQF). A compositionally biased stretch (basic and acidic residues) spans 43–57 (FIDADGKDVTEKETC). The segment covering 58–72 (SELSLNDAENTTRTE) has biased composition (polar residues). Over residues 77-86 (PEAKRIKLDD) the composition is skewed to basic and acidic residues. A compositionally biased stretch (basic residues) spans 104–120 (EKKRARGQNKSRPHMKH). 2 C3H1-type zinc fingers span residues 123–153 (FEEN…HDVA) and 161–191 (EDIR…HLGE). Residues 301 to 303 (PLT) and Q355 each bind FMN. C386 serves as the catalytic Proton donor. Residues K425, H455, 487-489 (NGD), and 510-511 (AR) contribute to the FMN site.

Belongs to the Dus family. Dus3 subfamily. FMN serves as cofactor.

It carries out the reaction 5,6-dihydrouridine(47) in tRNA + NAD(+) = uridine(47) in tRNA + NADH + H(+). The enzyme catalyses 5,6-dihydrouridine(47) in tRNA + NADP(+) = uridine(47) in tRNA + NADPH + H(+). It catalyses the reaction a 5,6-dihydrouridine in mRNA + NAD(+) = a uridine in mRNA + NADH + H(+). The catalysed reaction is a 5,6-dihydrouridine in mRNA + NADP(+) = a uridine in mRNA + NADPH + H(+). Its function is as follows. Catalyzes the synthesis of dihydrouridine, a modified base, in various RNAs, such as tRNAs, mRNAs and some long non-coding RNAs (lncRNAs). Mainly modifies the uridine in position 47 (U47) in the D-loop of most cytoplasmic tRNAs. Also able to mediate the formation of dihydrouridine in some mRNAs, thereby regulating their translation. This chain is tRNA-dihydrouridine(47) synthase [NAD(P)(+)]-like (dus3l), found in Xenopus laevis (African clawed frog).